The following is a 139-amino-acid chain: MKKAALLNSDISSVVSRLGHTDSLVIGDAGLPIPETTTRIDLALTHNVPTFLQVVSVVTSEMQVEAAILAEEIIEKNPAVHDALLDQLKQLEQHQGNSIALHYVSHEEFKTQSGKSRAIIRSGECSPYANVILCAGVTF.

His20 acts as the Proton donor in catalysis. Substrate is bound by residues Asp28, His106, and Tyr128–Asn130.

Belongs to the RbsD / FucU family. RbsD subfamily. Homodecamer.

The protein localises to the cytoplasm. The catalysed reaction is beta-D-ribopyranose = beta-D-ribofuranose. It functions in the pathway carbohydrate metabolism; D-ribose degradation; D-ribose 5-phosphate from beta-D-ribopyranose: step 1/2. Functionally, catalyzes the interconversion of beta-pyran and beta-furan forms of D-ribose. In Pectobacterium carotovorum subsp. carotovorum (strain PC1), this protein is D-ribose pyranase.